Here is an 811-residue protein sequence, read N- to C-terminus: Mitochondrial intermediate peptidase (811 aa).

The transit peptide at 1-25 directs the protein to the mitochondrion; that stretch reads MRSGSRLSNYLVRLSGRVSFTQKRS. The disordered stretch occupies residues 423–450; sequence TENGEKASTDTSTSTTTSTTTTDSTTTT. Low complexity predominate over residues 431–450; it reads TDTSTSTTTSTTTTDSTTTT. H593 contacts Zn(2+). The active site involves E594. H597 and H600 together coordinate Zn(2+).

It belongs to the peptidase M3 family. The cofactor is Zn(2+).

Its subcellular location is the mitochondrion matrix. It catalyses the reaction Release of an N-terminal octapeptide as second stage of processing of some proteins imported into the mitochondrion.. In terms of biological role, cleaves proteins, imported into the mitochondrion, to their mature size. While most mitochondrial precursor proteins are processed to the mature form in one step by mitochondrial processing peptidase (MPP), the sequential cleavage by MIP of an octapeptide after initial processing by MPP is a required step for a subgroup of nuclear-encoded precursor proteins destined for the matrix or the inner membrane. This is Mitochondrial intermediate peptidase (OCT1) from Lodderomyces elongisporus (strain ATCC 11503 / CBS 2605 / JCM 1781 / NBRC 1676 / NRRL YB-4239) (Yeast).